The following is a 290-amino-acid chain: 4-hydroxybenzoate octaprenyltransferase (290 aa).

6 helical membrane passes run 41 to 61, 89 to 109, 133 to 153, 158 to 178, 202 to 224, and 269 to 289; these read WPLV…GCAM, WEAV…ILPL, FFAI…PMAF, GTVP…SVAY, FGRF…YAWI, and WLGG…GAAG.

The protein belongs to the UbiA prenyltransferase family. Mg(2+) serves as cofactor.

Its subcellular location is the cell inner membrane. It catalyses the reaction all-trans-octaprenyl diphosphate + 4-hydroxybenzoate = 4-hydroxy-3-(all-trans-octaprenyl)benzoate + diphosphate. The protein operates within cofactor biosynthesis; ubiquinone biosynthesis. In terms of biological role, catalyzes the prenylation of para-hydroxybenzoate (PHB) with an all-trans polyprenyl group. Mediates the second step in the final reaction sequence of ubiquinone-8 (UQ-8) biosynthesis, which is the condensation of the polyisoprenoid side chain with PHB, generating the first membrane-bound Q intermediate 3-octaprenyl-4-hydroxybenzoate. The chain is 4-hydroxybenzoate octaprenyltransferase from Burkholderia vietnamiensis (strain G4 / LMG 22486) (Burkholderia cepacia (strain R1808)).